Consider the following 569-residue polypeptide: 3-(3-hydroxy-phenyl)propionate/3-hydroxycinnamic acid hydroxylase (569 aa).

Residues 12-41 (DVVV…VVDE) and 277-287 (FRKGRLMLAGD) contribute to the FAD site.

The protein belongs to the PheA/TfdB FAD monooxygenase family. Requires FAD as cofactor.

It catalyses the reaction 3-(3-hydroxyphenyl)propanoate + NADH + O2 + H(+) = 3-(2,3-dihydroxyphenyl)propanoate + NAD(+) + H2O. It carries out the reaction (2E)-3-(3-hydroxyphenyl)prop-2-enoate + NADH + O2 + H(+) = (2E)-3-(2,3-dihydroxyphenyl)prop-2-enoate + NAD(+) + H2O. It functions in the pathway aromatic compound metabolism; 3-phenylpropanoate degradation. In terms of biological role, catalyzes the insertion of one atom of molecular oxygen into position 2 of the phenyl ring of 3-(3-hydroxyphenyl)propionate (3-HPP) and hydroxycinnamic acid (3HCI). This chain is 3-(3-hydroxy-phenyl)propionate/3-hydroxycinnamic acid hydroxylase, found in Mycolicibacterium vanbaalenii (strain DSM 7251 / JCM 13017 / BCRC 16820 / KCTC 9966 / NRRL B-24157 / PYR-1) (Mycobacterium vanbaalenii).